We begin with the raw amino-acid sequence, 158 residues long: Large ribosomal subunit protein bL21 (158 aa).

A disordered region spans residues 127 to 158; the sequence is TQETKSAASVKKAAKKSAPQKQAAVASNSKED. Low complexity predominate over residues 131–158; sequence KSAASVKKAAKKSAPQKQAAVASNSKED.

Belongs to the bacterial ribosomal protein bL21 family. Part of the 50S ribosomal subunit. Contacts protein L20.

This protein binds to 23S rRNA in the presence of protein L20. The protein is Large ribosomal subunit protein bL21 of Bartonella henselae (strain ATCC 49882 / DSM 28221 / CCUG 30454 / Houston 1) (Rochalimaea henselae).